The chain runs to 560 residues: Zorya protein ZorC (560 aa).

In terms of biological role, component of antiviral defense system Zorya type I, composed of ZorA, ZorB, ZorC and ZorD. Expression of Zorya type I in E.coli (strain MG1655) confers 10,000-fold resistance to phage SECphi27, 100-fold resistance to lambda, and 10-fold resistance to T7. While most T7 infected Zorya-containing cells undergo abortive infection, a minority produce viable phage progeny. These eventually accumulate to a high multiplicity of infection, leading to culture collapse by 2 hours after initial infection. ZorA and ZorB probably assemble in the cell inner membrane and exert their effect there. This chain is Zorya protein ZorC, found in Escherichia coli O139:H28 (strain E24377A / ETEC).